A 353-amino-acid polypeptide reads, in one-letter code: Methylthioribose-1-phosphate isomerase (353 aa).

Substrate-binding positions include 51 to 53 (RGA), R94, and Q203. Residue D244 is the Proton donor of the active site. 254–255 (NK) is a substrate binding site.

This sequence belongs to the eIF-2B alpha/beta/delta subunits family. MtnA subfamily.

The catalysed reaction is 5-(methylsulfanyl)-alpha-D-ribose 1-phosphate = 5-(methylsulfanyl)-D-ribulose 1-phosphate. It functions in the pathway amino-acid biosynthesis; L-methionine biosynthesis via salvage pathway; L-methionine from S-methyl-5-thio-alpha-D-ribose 1-phosphate: step 1/6. Functionally, catalyzes the interconversion of methylthioribose-1-phosphate (MTR-1-P) into methylthioribulose-1-phosphate (MTRu-1-P). In Trichodesmium erythraeum (strain IMS101), this protein is Methylthioribose-1-phosphate isomerase.